The primary structure comprises 308 residues: Ribosomal RNA small subunit methyltransferase H (308 aa).

S-adenosyl-L-methionine-binding positions include 32-34 (AGH), aspartate 51, phenylalanine 78, aspartate 99, and glutamine 106.

It belongs to the methyltransferase superfamily. RsmH family.

Its subcellular location is the cytoplasm. The enzyme catalyses cytidine(1402) in 16S rRNA + S-adenosyl-L-methionine = N(4)-methylcytidine(1402) in 16S rRNA + S-adenosyl-L-homocysteine + H(+). Functionally, specifically methylates the N4 position of cytidine in position 1402 (C1402) of 16S rRNA. The chain is Ribosomal RNA small subunit methyltransferase H from Mesoplasma florum (strain ATCC 33453 / NBRC 100688 / NCTC 11704 / L1) (Acholeplasma florum).